Consider the following 470-residue polypeptide: Nuclear receptor subfamily 0 group B member 1 (470 aa).

3 tandem repeats follow at residues 1–67 (MAGE…YRCC), 68–133 (FCGK…YRCC), and 134–200 (FCGE…YRCC). The segment at 1 to 253 (MAGENHQWQG…RPVALKNPQV (253 aa)) is 4 X 67 AA tandem repeats. Short sequence motifs (LXXLL motif) lie at residues 13-17 (LYNML), 80-84 (LYSML), and 146-150 (LYSLL). One copy of the 4; truncated repeat lies at 201–253 (FCGEDHPQQGSTLYCMPTSTNQAQAAPEERPRAPWWDTSSGALRPVALKNPQV). An NR LBD domain is found at 205 to 469 (DHPQQGSTLY…DMMLEMLCTK (265 aa)). The short motif at 461–466 (MMLEML) is the AF-2 motif element.

The protein belongs to the nuclear hormone receptor family. NR0 subfamily. In terms of assembly, homodimer. Interacts with NR5A1, NR5A2, NR0B2 and with COPS2. Interacts with ESRRB; represses ESRRB activity at the GATA6 promoter.

It localises to the nucleus. Its subcellular location is the cytoplasm. Nuclear receptor that lacks a DNA-binding domain and acts as a corepressor that inhibits the transcriptional activity of other nuclear receptors through heterodimeric interactions. Component of a cascade required for the development of the hypothalamic-pituitary-adrenal-gonadal axis. May also have a role in the development of the embryo and in the maintenance of embryonic stem cell pluripotency. This is Nuclear receptor subfamily 0 group B member 1 (NR0B1) from Macaca mulatta (Rhesus macaque).